The primary structure comprises 570 residues: nebramycin 5' synthase (570 aa).

The tract at residues 1 to 354 (MRVLGLNGWP…AAAAVAVELG (354 aa)) is kae1-like. Tobramycin is bound at residue Asp-12. His-14 functions as the Proton acceptor in the catalytic mechanism. An ATP-binding site is contributed by Lys-39. Residues His-114, His-118, and Asp-137 each coordinate Fe cation. The carbamoyl adenylate site is built by Gln-139, Gly-168, and Glu-172. Tobramycin is bound by residues Glu-172 and Asp-228. Carbamoyl adenylate contacts are provided by Gly-310 and Asn-314. Asp-338 is a Fe cation binding site. Residues 367 to 570 (GPEFSPDQVR…PYLVTKDLRH (204 aa)) form a yrdC-like region. Residues Arg-418 and Arg-449 each coordinate ATP. Residue 418-419 (RA) participates in carbamoyl phosphate binding. Carbamoyl phosphate contacts are provided by residues Arg-498 and 528 to 530 (NTS).

This sequence belongs to the NodU/CmcH family. Requires Fe(2+) as cofactor.

The enzyme catalyses tobramycin + carbamoyl phosphate + ATP + H2O = nebramycin 5' + AMP + phosphate + diphosphate + H(+). It catalyses the reaction kanamycin A + carbamoyl phosphate + ATP + H2O = 6''-O-carbamoylkanamycin A + AMP + phosphate + diphosphate + H(+). The catalysed reaction is carbamoyl phosphate + ATP + H2O = carbamoyl adenylate + phosphate + diphosphate. It carries out the reaction tobramycin + carbamoyl adenylate = nebramycin 5' + AMP + H(+). The enzyme catalyses carbamoyl adenylate + kanamycin A = 6''-O-carbamoylkanamycin A + AMP + H(+). It functions in the pathway antibiotic biosynthesis; kanamycin biosynthesis. It participates in antibiotic biosynthesis; tobramycin biosynthesis. Its activity is regulated as follows. ADP inhibits the formation of nebramycin 5'. TobZ is involved in the biosynthesis of the 2-deoxystreptamine-containing aminoglycoside antibiotics such as nebramycin 5 and 6-O-carbamoylkanamycin. Catalyzes the hydrolysis of carbamoyl phosphate and its subsequent adenylation by ATP to yield O-carbamoyladenylate. Then it catalyzes the transfer of the carbamoyl moiety from O-carbamoyladenylate to the tobramycin 6-hydroxy group to yield nebramycin 5'. It catalyzes the same reaction with kanamycin A. These reactions are considerably slower in the presence of deoxy-ATP. The protein is nebramycin 5' synthase (tobZ) of Streptoalloteichus tenebrarius (strain ATCC 17920 / DSM 40477 / JCM 4838 / CBS 697.72 / NBRC 16177 / NCIMB 11028 / NRRL B-12390 / A12253. 1 / ISP 5477) (Streptomyces tenebrarius).